Consider the following 352-residue polypeptide: Pyruvate dehydrogenase E1 component subunit beta, mitochondrial (352 aa).

The N-terminal 21 residues, 1–21 (MALRKCGNLFVARLAGTSTRA), are a transit peptide targeting the mitochondrion. A thiamine diphosphate-binding site is contributed by Glu81. Residues Ile134, Ala182, Ile183, Asp185, and Asn187 each contribute to the K(+) site.

In terms of assembly, tetramer of 2 alpha and 2 beta subunits. Thiamine diphosphate serves as cofactor.

It is found in the mitochondrion matrix. The catalysed reaction is N(6)-[(R)-lipoyl]-L-lysyl-[protein] + pyruvate + H(+) = N(6)-[(R)-S(8)-acetyldihydrolipoyl]-L-lysyl-[protein] + CO2. Functionally, the pyruvate dehydrogenase complex catalyzes the overall conversion of pyruvate to acetyl-CoA and CO(2). It contains multiple copies of three enzymatic components: pyruvate dehydrogenase (E1), dihydrolipoamide acetyltransferase (E2) and lipoamide dehydrogenase (E3). The polypeptide is Pyruvate dehydrogenase E1 component subunit beta, mitochondrial (pdhb-1) (Caenorhabditis elegans).